The following is a 548-amino-acid chain: ATP synthase subunit alpha (548 aa).

Residue 172-179 participates in ATP binding; that stretch reads GDRKTGKT. Residues 511 to 548 are disordered; the sequence is FETTSGESVVPDENVEAMSEDDVEKESVKVRKPAPKKK. A compositionally biased stretch (acidic residues) spans 523 to 534; sequence ENVEAMSEDDVE.

This sequence belongs to the ATPase alpha/beta chains family. As to quaternary structure, F-type ATPases have 2 components, CF(1) - the catalytic core - and CF(0) - the membrane proton channel. CF(1) has five subunits: alpha(3), beta(3), gamma(1), delta(1), epsilon(1). CF(0) has three main subunits: a(1), b(2) and c(9-12). The alpha and beta chains form an alternating ring which encloses part of the gamma chain. CF(1) is attached to CF(0) by a central stalk formed by the gamma and epsilon chains, while a peripheral stalk is formed by the delta and b chains.

Its subcellular location is the cell membrane. It catalyses the reaction ATP + H2O + 4 H(+)(in) = ADP + phosphate + 5 H(+)(out). In terms of biological role, produces ATP from ADP in the presence of a proton gradient across the membrane. The alpha chain is a regulatory subunit. This Mycobacterium sp. (strain JLS) protein is ATP synthase subunit alpha.